Consider the following 1245-residue polypeptide: ATP-dependent helicase/deoxyribonuclease subunit B (1245 aa).

Residues Trp-737–Glu-758 form a disordered region. Residues Leu-748–Glu-758 are compositionally biased toward basic and acidic residues.

The protein belongs to the helicase family. AddB/RexB type 2 subfamily. As to quaternary structure, heterodimer of AddA and RexB. Mg(2+) is required as a cofactor.

In terms of biological role, the heterodimer acts as both an ATP-dependent DNA helicase and an ATP-dependent, dual-direction single-stranded exonuclease. Recognizes the chi site generating a DNA molecule suitable for the initiation of homologous recombination. This subunit has 5' -&gt; 3' nuclease activity but not helicase activity. This Limosilactobacillus fermentum (strain NBRC 3956 / LMG 18251) (Lactobacillus fermentum) protein is ATP-dependent helicase/deoxyribonuclease subunit B.